Here is a 427-residue protein sequence, read N- to C-terminus: ATP-dependent RNA helicase DDX39A (427 aa).

The span at 1-19 (MAEQDVENELLDYDEDEEP) shows a compositional bias: acidic residues. Residues 1–35 (MAEQDVENELLDYDEDEEPQVPQESTPAPPKKDVK) form a disordered region. At Ala-2 the chain carries N-acetylalanine. Lys-31 participates in a covalent cross-link: Glycyl lysine isopeptide (Lys-Gly) (interchain with G-Cter in SUMO2). Lys-35 bears the N6-acetyllysine; alternate mark. Lys-35 participates in a covalent cross-link: Glycyl lysine isopeptide (Lys-Gly) (interchain with G-Cter in SUMO2); alternate. Ser-37 carries the phosphoserine modification. The short motif at 44 to 72 (SGFRDFLLKPELLRAIVDCGFEHPSEVQH) is the Q motif element. The 174-residue stretch at 75 to 248 (IPQAILGMDV…RKFMQDPMEV (174 aa)) folds into the Helicase ATP-binding domain. Residue 88-95 (AKSGMGKT) participates in ATP binding. Residues Lys-154 and Lys-162 each participate in a glycyl lysine isopeptide (Lys-Gly) (interchain with G-Cter in SUMO2) cross-link. At Thr-171 the chain carries Phosphothreonine. Positions 195–198 (DECD) match the DECD box motif. Residues Lys-240 and Lys-255 each participate in a glycyl lysine isopeptide (Lys-Gly) (interchain with G-Cter in SUMO2) cross-link. Residues 260–421 (GLQQYYVKLK…ELPEEIDIST (162 aa)) enclose the Helicase C-terminal domain. Ser-426 carries the phosphoserine modification.

It belongs to the DEAD box helicase family. DECD subfamily. As to quaternary structure, binds ALYREF/THOC4 and DDX39B/BAT1. Interacts with the apo-AREX complex component SARNP. Interacts with MX1. Interacts with MCM3AP isoform GANP. Interacts with ECD. Interacts with PHAX; this interaction stimulates PHAX RNA binding activity. Post-translationally, SUMOylated by RANBP2; SUMOylation modification affects its ability to bind RNA.

The protein resides in the nucleus. Its subcellular location is the cytoplasm. It catalyses the reaction ATP + H2O = ADP + phosphate + H(+). In terms of biological role, helicase that plays an essential role in mRNA export and is involved in multiple steps in RNA metabolism including alternative splicing. Regulates nuclear mRNA export to the cytoplasm through association with ECD. Also involved in spliceosomal uridine-rich small nuclear RNA (U snRNA) export by stimulating the RNA binding of adapter PHAX. Plays a role in the negative regulation of type I IFN production by increasing the nuclear retention of antiviral transcripts and thus reducing their protein expression. Independently of the interferon pathway, plays an antiviral role against alphaviruses by binding to a 5' conserved sequence element in the viral genomic RNA. This chain is ATP-dependent RNA helicase DDX39A (Ddx39a), found in Rattus norvegicus (Rat).